The following is a 419-amino-acid chain: Large ribosomal subunit protein uL4 (419 aa).

Residue Ala-2 is modified to N-acetylalanine. The residue at position 14 (Lys-14) is an N6-acetyllysine. Omega-N-methylarginine is present on Arg-97. Position 106 is an N6-acetyllysine (Lys-106). Residue Lys-239 forms a Glycyl lysine isopeptide (Lys-Gly) (interchain with G-Cter in SUMO2) linkage. At Lys-259 the chain carries N6-acetyllysine. Residue Thr-266 is modified to Phosphothreonine. Ser-290 and Ser-295 each carry phosphoserine. The residue at position 300 (Arg-300) is a Citrulline. Lys-327 participates in a covalent cross-link: Glycyl lysine isopeptide (Lys-Gly) (interchain with G-Cter in SUMO2). Residues Lys-333 and Lys-353 each carry the N6-acetyllysine modification. At Lys-364 the chain carries N6-acetyllysine; alternate. Residue Lys-364 forms a Glycyl lysine isopeptide (Lys-Gly) (interchain with G-Cter in SUMO1); alternate linkage. The segment covering 364-379 (KSEKVVPEKGTADKKP) has biased composition (basic and acidic residues). The interval 364–419 (KSEKVVPEKGTADKKPAVGKKGKKVDAKKQKPAGKKVVAKKPAEKKPTTEEKKPAA) is disordered. Ser-365 carries the post-translational modification Phosphoserine. Basic residues predominate over residues 393 to 402 (QKPAGKKVVA). A compositionally biased stretch (basic and acidic residues) spans 404–419 (KPAEKKPTTEEKKPAA).

This sequence belongs to the universal ribosomal protein uL4 family. As to quaternary structure, component of the large ribosomal subunit. May bind IPO9 with low affinity. Interacts with RBM3. Citrullinated by PADI4.

The protein resides in the cytoplasm. Its function is as follows. Component of the large ribosomal subunit. The ribosome is a large ribonucleoprotein complex responsible for the synthesis of proteins in the cell. The sequence is that of Large ribosomal subunit protein uL4 (Rpl4) from Mus musculus (Mouse).